The sequence spans 467 residues: Chromosomal replication initiator protein DnaA (467 aa).

Positions 1–90 (MSLSLWQQCL…KPVTQTPQAA (90 aa)) are domain I, interacts with DnaA modulators. A domain II region spans residues 91 to 130 (VTSNVAAPAQVAQTQPQRAAPSTRSGWDNVPAPAEPTYRS). Over residues 98–111 (PAQVAQTQPQRAAP) the composition is skewed to low complexity. A disordered region spans residues 98-119 (PAQVAQTQPQRAAPSTRSGWDN). The tract at residues 131–347 (NVNVKHTFDN…GALNRVIANA (217 aa)) is domain III, AAA+ region. Residues G175, G177, K178, and T179 each contribute to the ATP site. The tract at residues 348–467 (NFTGRAITID…FSNLIRTLSS (120 aa)) is domain IV, binds dsDNA.

It belongs to the DnaA family. In terms of assembly, oligomerizes as a right-handed, spiral filament on DNA at oriC.

It localises to the cytoplasm. Functionally, plays an essential role in the initiation and regulation of chromosomal replication. ATP-DnaA binds to the origin of replication (oriC) to initiate formation of the DNA replication initiation complex once per cell cycle. Binds the DnaA box (a 9 base pair repeat at the origin) and separates the double-stranded (ds)DNA. Forms a right-handed helical filament on oriC DNA; dsDNA binds to the exterior of the filament while single-stranded (ss)DNA is stabiized in the filament's interior. The ATP-DnaA-oriC complex binds and stabilizes one strand of the AT-rich DNA unwinding element (DUE), permitting loading of DNA polymerase. After initiation quickly degrades to an ADP-DnaA complex that is not apt for DNA replication. Binds acidic phospholipids. The protein is Chromosomal replication initiator protein DnaA of Shigella sonnei (strain Ss046).